Reading from the N-terminus, the 576-residue chain is Acetylcholine receptor subunit alpha-like 2 (576 aa).

The first 21 residues, 1-21, serve as a signal peptide directing secretion; the sequence is MAPGCCTTRPRPIALLAHIWR. The Extracellular portion of the chain corresponds to 22-261; the sequence is HCKPLCLLLV…FFNITLRRKT (240 aa). N-linked (GlcNAc...) asparagine glycosylation is present at Asn-65. 2 cysteine pairs are disulfide-bonded: Cys-169/Cys-183 and Cys-243/Cys-244. Asn-254 is a glycosylation site (N-linked (GlcNAc...) asparagine). Helical transmembrane passes span 262–285, 293–311, and 327–346; these read LFYT…VFYL, IALC…LLIS, and YLLF…IIIL. The Cytoplasmic segment spans residues 347-526; it reads NIHYRKPSTH…WGFVAMVMDR (180 aa). A helical membrane pass occupies residues 527–545; sequence LFLWLFMIASLVGTFVILG. The N-linked (GlcNAc...) asparagine glycan is linked to Asn-570.

Belongs to the ligand-gated ion channel (TC 1.A.9) family. Acetylcholine receptor (TC 1.A.9.1) subfamily. CNS in embryos.

Its subcellular location is the postsynaptic cell membrane. It localises to the cell membrane. Functionally, after binding acetylcholine, the AChR responds by an extensive change in conformation that affects all subunits and leads to opening of an ion-conducting channel across the plasma membrane. The sequence is that of Acetylcholine receptor subunit alpha-like 2 (nAChRalpha2) from Drosophila melanogaster (Fruit fly).